The following is a 449-amino-acid chain: Glucose-6-phosphate isomerase (449 aa).

Catalysis depends on Glu-291, which acts as the Proton donor. Residues His-312 and Lys-426 contribute to the active site.

This sequence belongs to the GPI family.

The protein localises to the cytoplasm. It catalyses the reaction alpha-D-glucose 6-phosphate = beta-D-fructose 6-phosphate. The protein operates within carbohydrate biosynthesis; gluconeogenesis. Its pathway is carbohydrate degradation; glycolysis; D-glyceraldehyde 3-phosphate and glycerone phosphate from D-glucose: step 2/4. In terms of biological role, catalyzes the reversible isomerization of glucose-6-phosphate to fructose-6-phosphate. This chain is Glucose-6-phosphate isomerase, found in Streptococcus pyogenes serotype M18 (strain MGAS8232).